A 301-amino-acid chain; its full sequence is Porin (301 aa).

Homotrimer.

Its subcellular location is the cell outer membrane. Functionally, forms channels that allow the passive diffusion of small hydrophilic solutes up to an exclusion limit of about 0.6 kDa. This Rhodobacter capsulatus (Rhodopseudomonas capsulata) protein is Porin.